The following is a 429-amino-acid chain: Enolase (429 aa).

(2R)-2-phosphoglycerate is bound at residue glutamine 162. Glutamate 204 (proton donor) is an active-site residue. Residues aspartate 241, glutamate 283, and aspartate 310 each contribute to the Mg(2+) site. Positions 335, 364, 365, and 386 each coordinate (2R)-2-phosphoglycerate. Lysine 335 (proton acceptor) is an active-site residue.

This sequence belongs to the enolase family. Mg(2+) serves as cofactor.

The protein resides in the cytoplasm. It is found in the secreted. Its subcellular location is the cell surface. The enzyme catalyses (2R)-2-phosphoglycerate = phosphoenolpyruvate + H2O. It functions in the pathway carbohydrate degradation; glycolysis; pyruvate from D-glyceraldehyde 3-phosphate: step 4/5. Catalyzes the reversible conversion of 2-phosphoglycerate (2-PG) into phosphoenolpyruvate (PEP). It is essential for the degradation of carbohydrates via glycolysis. This chain is Enolase, found in Mycolicibacterium vanbaalenii (strain DSM 7251 / JCM 13017 / BCRC 16820 / KCTC 9966 / NRRL B-24157 / PYR-1) (Mycobacterium vanbaalenii).